A 1321-amino-acid chain; its full sequence is MSDSVILRSVKKFGEENHAFESDGSHNNDKKSRLQDKMKEGDIRVGFFELFRFSSSKDIWLMLMGGVCALLHGMAQPGILIIFGIMTDIFIKYDIERQELEIPGKACVNNTIVWINSSFHQNMTNGTVCGLVDIESEMIKFSGIYAGVGMTVLILGYFQIRLWVITGARQIRRMRKIYFRRIMRMEIGWFDCTSVGELNSRFADDIEKINDAIADQLAHFLQRMSTAMCGLLLGFYRGWKLTLVILAVSPLIGIGAAVIGLSIAKFTELELKAYAKAGSIADEVLSSIRTVAAFGGENKEVERYEKNLVFAQRWGIWKGMVMGFFTGYMWCLIFFCYALAFWYGSTLVLDEEEYTPGTLVQIFLCVILAAMNIGHASSCLEIFSTGCSAATNIFQTIDRQPVIDCMSGDGYKLDRIKGEIEFHNVTFHYPSRPDVKILDNLSMVIKPGETTALVGSSGAGKSTALQLIQRFYDPCEGMVTLDGHDIRSLNIRWLRDQIGIVEQEPVLFSTTIAENIRFGREDATMEDIVQAAKDANAYNFIMALPQQFDTLVGEGGGQMSGGQKQRVAIARALIRNPKILLLDMATSALDNESEARVQEALNKIQHGHTIISVAHRLSTVRAADVIIGFEHGVAVERGTHEELLERKGVYFMLVTLQSQGDNAHKETSIMGKDATEGGTLERTFSRGSYRDSLRASIRQRSKSQLSLLTHDPPLAVADHKSSYKDSKDNDVLVEEVEPAPVRRILKYNIPEWHYILVGSLSAAINGAVTPIYSLLFSQLLGTFSLLDKEQQRSEIHSMCLFFVILGCVSIFTQFLQGYTFAKSGELLTKRLRKFGFKAMLGQDIGWFDDLRNNPGVLTTRLATDASQVQGATGSQVGMMVNSFTNIIAALLIAFFFSWKLSLIITIFFPFLALSGAVQTKMLTGFASQDKQALEKAGQITSEALSNIRTVAGIGVEGRFIKAFEVELQTSYKTAVRKANIYGLCFAFSQGIAFLANSAAYRYGGYLIAYEGLGFSHVFRVVSSVALSATAVGRTFSYTPSYAKAKISAARFFQLLDRKPPINVYSEAGEKWDNFQGKIDFIDCKFTYPSRPDIQVLNGLSVSVNPGQTLAFVGSSGCGKSTSIQLLERFYDPDQGTVMIDGHDSKKVNIQFLRSNIGIVSQEPVLFDCSIMDNIKYGDNTKEISVERAIAAAKQAQLHDFVMSLPEKYETNVGIQGSQLSRGEKQRIAIARAIVRDPKILLLDEATSALDTESEKTVQTALDKAREGRTCIVIAHRLSTIQNSDIIAVVSQGVVIEKGTHEKLMAQKGAYYKLVITGAPIS.

The Cytoplasmic portion of the chain corresponds to 1 to 62 (MSDSVILRSV…FSSSKDIWLM (62 aa)). The region spanning 62-385 (MLMGGVCALL…ASSCLEIFST (324 aa)) is the ABC transmembrane type-1 1 domain. Residues 63-83 (LMGGVCALLHGMAQPGILIIF) traverse the membrane as a helical segment. Topologically, residues 84–147 (GIMTDIFIKY…MIKFSGIYAG (64 aa)) are extracellular. Residues Asn-109, Asn-116, Asn-122, and Asn-125 are each glycosylated (N-linked (GlcNAc...) asparagine). A helical membrane pass occupies residues 148 to 168 (VGMTVLILGYFQIRLWVITGA). Over 169-215 (RQIRRMRKIYFRRIMRMEIGWFDCTSVGELNSRFADDIEKINDAIAD) the chain is Cytoplasmic. Residues 216–236 (QLAHFLQRMSTAMCGLLLGFY) traverse the membrane as a helical segment. At 237–240 (RGWK) the chain is on the extracellular side. A helical transmembrane segment spans residues 241–261 (LTLVILAVSPLIGIGAAVIGL). Over 262–319 (SIAKFTELELKAYAKAGSIADEVLSSIRTVAAFGGENKEVERYEKNLVFAQRWGIWKG) the chain is Cytoplasmic. Residues 320–340 (MVMGFFTGYMWCLIFFCYALA) form a helical membrane-spanning segment. Topologically, residues 341–353 (FWYGSTLVLDEEE) are extracellular. The chain crosses the membrane as a helical span at residues 354–374 (YTPGTLVQIFLCVILAAMNIG). Residues 375–755 (HASSCLEIFS…KYNIPEWHYI (381 aa)) lie on the Cytoplasmic side of the membrane. An ABC transporter 1 domain is found at 420 to 656 (IEFHNVTFHY…KGVYFMLVTL (237 aa)). 455-462 (GSSGAGKS) contacts ATP. Thr-586 carries the phosphothreonine modification. Position 587 is a phosphoserine (Ser-587). The tract at residues 651–674 (FMLVTLQSQGDNAHKETSIMGKDA) is interaction with HAX1. Residues Ser-692, Ser-703, and Ser-706 each carry the phosphoserine modification. Residues 755–1043 (ILVGSLSAAI…TFSYTPSYAK (289 aa)) enclose the ABC transmembrane type-1 2 domain. A helical membrane pass occupies residues 756–776 (LVGSLSAAINGAVTPIYSLLF). Topologically, residues 777 to 794 (SQLLGTFSLLDKEQQRSE) are extracellular. Residues 795 to 815 (IHSMCLFFVILGCVSIFTQFL) traverse the membrane as a helical segment. Residues 816-869 (QGYTFAKSGELLTKRLRKFGFKAMLGQDIGWFDDLRNNPGVLTTRLATDASQVQ) are Cytoplasmic-facing. 2 helical membrane-spanning segments follow: residues 870–890 (GATGSQVGMMVNSFTNIIAAL) and 891–911 (LIAFFFSWKLSLIITIFFPFL). The Cytoplasmic segment spans residues 912–979 (ALSGAVQTKM…SYKTAVRKAN (68 aa)). The helical transmembrane segment at 980 to 1000 (IYGLCFAFSQGIAFLANSAAY) threads the bilayer. At 1001 to 1011 (RYGGYLIAYEG) the chain is on the extracellular side. The chain crosses the membrane as a helical span at residues 1012 to 1032 (LGFSHVFRVVSSVALSATAVG). The Cytoplasmic portion of the chain corresponds to 1033-1321 (RTFSYTPSYA…KLVITGAPIS (289 aa)). The 239-residue stretch at 1078–1316 (IDFIDCKFTY…KGAYYKLVIT (239 aa)) folds into the ABC transporter 2 domain. 1113–1120 (GSSGCGKS) provides a ligand contact to ATP. At Ser-1321 the chain carries Phosphoserine.

This sequence belongs to the ABC transporter superfamily. ABCB family. Multidrug resistance exporter (TC 3.A.1.201) subfamily. Interacts with HAX1. Interacts with the adapter protein complex 2 (AP-2) throught AP2A2 or AP2A1; this interaction regulates cell membrane expression of ABCB11 through its internalization in a clathrin-dependent manner and its subsequent degradation. In terms of processing, ubiquitinated; short-chain ubiquitination regulates cell-Surface expression of ABCB11. N-glycosylated. In terms of tissue distribution, expressed predominantly, if not exclusively in the liver, where it was further localized to the canalicular microvilli and to subcanalicular vesicles of the hepatocytes by in situ.

The protein resides in the apical cell membrane. Its subcellular location is the recycling endosome membrane. It localises to the endosome. The protein localises to the cell membrane. It carries out the reaction cholate(in) + ATP + H2O = cholate(out) + ADP + phosphate + H(+). The catalysed reaction is taurocholate(in) + ATP + H2O = taurocholate(out) + ADP + phosphate + H(+). The enzyme catalyses glycocholate(in) + ATP + H2O = glycocholate(out) + ADP + phosphate + H(+). It catalyses the reaction glycochenodeoxycholate(in) + ATP + H2O = glycochenodeoxycholate(out) + ADP + phosphate + H(+). It carries out the reaction taurochenodeoxycholate(in) + ATP + H2O = taurochenodeoxycholate(out) + ADP + phosphate + H(+). The catalysed reaction is glycoursodeoxycholate(in) + ATP + H2O = glycoursodeoxycholate(out) + ADP + phosphate + H(+). The enzyme catalyses tauroursodeoxycholate(in) + ATP + H2O = tauroursodeoxycholate(out) + ADP + phosphate + H(+). It catalyses the reaction taurodeoxycholate(in) + ATP + H2O = taurodeoxycholate(out) + ADP + phosphate + H(+). It carries out the reaction pravastatin(in) + ATP + H2O = pravastatin(out) + ADP + phosphate + H(+). Its activity is regulated as follows. The uptake of taurocholate is inhibited by taurolithocholate sulfate with an IC(50) of 52.9 uM. Pravastatin competitively inhibits the transport of taurocholic acid. Cyclosporin A, glibenclamide, rifampicin and troglitazonestrongly competitively inhibit the transport activity of taurocholate. The canalicular transport activity of taurocholate is strongly dependent on canalicular membrane cholesterol content. The uptake of taurocholate is increased by short- and medium-chain fatty acids. Cholesterol increases transport capacity of taurocholate without affecting the affinity for the substrate. Catalyzes the transport of the major hydrophobic bile salts, such as taurine and glycine-conjugated cholic acid across the canalicular membrane of hepatocytes in an ATP-dependent manner, therefore participates in hepatic bile acid homeostasis and consequently to lipid homeostasis through regulation of biliary lipid secretion in a bile salts dependent manner. Transports taurine-conjugated bile salts more rapidly than glycine-conjugated bile salts. Also transports non-bile acid compounds, such as pravastatin and fexofenadine in an ATP-dependent manner and may be involved in their biliary excretion. The sequence is that of Bile salt export pump from Rattus norvegicus (Rat).